A 360-amino-acid chain; its full sequence is DNA ADP-ribosyl glycohydrolase (360 aa).

The Macro domain maps to 1–155 (MLRFVRGNLL…VYEPVENPKA (155 aa)). Residues 8–9 (NL), 20–22 (TVN), 31–34 (VALQ), and Thr-79 contribute to the ADP-D-ribose site. The active-site Nucleophile is the Lys-80. Residue 117–121 (GAGNG) coordinates ADP-D-ribose. Residues 167 to 338 (LTPARAALLK…VALDALLKRG (172 aa)) are interaction with DarT.

This sequence belongs to the DarG ADP-ribosyl glycohydrolase family. In terms of assembly, interacts (via C-terminus) with cognate toxin DarT; this heterodimeric complex neutralizes the toxic effect of DarT by preventing ssDNA binding to DarT and consequently inactivating the toxin by direct protein-protein interactions.

The enzyme catalyses an N-(ADP-alpha-D-ribosyl)-thymidine in DNA + H2O = a thymidine in DNA + ADP-D-ribose. In terms of biological role, antitoxin component of the hybrid type II/IV toxin-antitoxin (TA) system DarTG, which plays a crucial role in controlling bacterial growth and bacteriophage infection. De-ADP-ribosylates DNA modified on thymidine by its cognate toxin DarT, which neutralizes the activity of cognate toxin DarT. Upon expression in E.coli neutralizes the effect of cognate toxin DarT. Upon expression in M.tuberculosis neutralizes the toxic effects of endogenous DarT. This is DNA ADP-ribosyl glycohydrolase from Thermus aquaticus (strain ATCC BAA-2747 / Y51MC23).